The primary structure comprises 103 residues: Large ribosomal subunit protein mL63 (103 aa).

Belongs to the mitochondrion-specific ribosomal protein mL63 family.

It localises to the mitochondrion. The protein is Large ribosomal subunit protein mL63 (mrpl57) of Danio rerio (Zebrafish).